The sequence spans 196 residues: Adenylate kinase (196 aa).

An ATP-binding site is contributed by 9 to 17 (GIPGVGKST).

This sequence belongs to the archaeal adenylate kinase family.

The protein resides in the cytoplasm. It carries out the reaction AMP + ATP = 2 ADP. The polypeptide is Adenylate kinase (Thermococcus kodakarensis (strain ATCC BAA-918 / JCM 12380 / KOD1) (Pyrococcus kodakaraensis (strain KOD1))).